Here is a 485-residue protein sequence, read N- to C-terminus: Subtilisin-like protease 1 (485 aa).

The signal sequence occupies residues 1 to 19; sequence MGIFRFISISLAAVSAANA. A propeptide spanning residues 20–116 is cleaved from the precursor; it reads GHILSMGHAK…VEPDTTITIH (97 aa). In terms of domain architecture, Inhibitor I9 spans 34 to 116; the sequence is SYIVVMKDGT…VEPDTTITIH (83 aa). The Peptidase S8 domain maps to 126-400; it reads SWGLARISSQ…NILINNGDAK (275 aa). Active-site charge relay system residues include aspartate 158 and histidine 190. The N-linked (GlcNAc...) asparagine glycan is linked to asparagine 251. The active-site Charge relay system is the serine 345. Residues 377–394 are compositionally biased toward polar residues; sequence GTSSVTNPGPGTRTNILI. The interval 377-462 is disordered; that stretch reads GTSSVTNPGP…HTPFPNDDFN (86 aa). Over residues 409-418 the composition is skewed to pro residues; that stretch reads PSQPPKPSQP. Residues 419-428 are compositionally biased toward low complexity; the sequence is SKPQQPSEPQ. Residues 433 to 455 are compositionally biased toward pro residues; that stretch reads PQEPAPGQPAPAPAPVPQHPHTP.

This sequence belongs to the peptidase S8 family.

The protein localises to the secreted. Secreted subtilisin-like serine protease with keratinolytic activity that contributes to pathogenicity. In Arthroderma otae (strain ATCC MYA-4605 / CBS 113480) (Microsporum canis), this protein is Subtilisin-like protease 1 (SUB1).